A 361-amino-acid chain; its full sequence is Inhibin alpha chain (361 aa).

The first 21 residues, 1-21 (MLPLLLPLQLLLLMVMKGGHG), serve as a signal peptide directing secretion. Residues 22-64 (CQGPELDRELVLAKVRALVLDALGPPNASKDGGKPVAQRLTRR) constitute a propeptide that is removed on maturation. The tract at residues 45-82 (GPPNASKDGGKPVAQRLTRRHAHTGGSTRRSMENEDED) is disordered. 3 N-linked (GlcNAc...) asparagine glycosylation sites follow: Asn48, Asn144, and Asn266. The propeptide at 65-230 (HAHTGGSTRR…PPSVGERARR (166 aa)) is inhibin alpha N-terminal region. Intrachain disulfides connect Cys260/Cys323, Cys289/Cys358, and Cys293/Cys360.

Belongs to the TGF-beta family. As to quaternary structure, dimeric, linked by one or more disulfide bonds. Activin B is a dimer of alpha and beta-B. Inhibin A is a dimer of alpha and beta-A. Inhibin B is a dimer of alpha and beta-B. Interacts with TGFBR3L; this interaction regulates female fertility. In terms of processing, proteolytic processing yields a number of bioactive forms, consisting either solely of the mature alpha chain, of the most N-terminal propeptide linked through a disulfide bond to the mature alpha chain, or of the entire proprotein.

The protein resides in the secreted. Functionally, inhibins and activins inhibit and activate, respectively, the secretion of follitropin by the pituitary gland. Inhibins/activins are involved in regulating a number of diverse functions such as hypothalamic and pituitary hormone secretion, gonadal hormone secretion, germ cell development and maturation, erythroid differentiation, insulin secretion, nerve cell survival, embryonic axial development or bone growth, depending on their subunit composition. Inhibins appear to oppose the functions of activins. Inhibin A is a dimer of alpha/INHA and beta-A/INHBA that functions as a feedback regulator in the hypothalamic-pituitary-gonadal (HPG) axis. Inhibits the secretion of FSH from the anterior pituitary gland by acting on pituitary gonadotrope cells. Antagonizes activin A by binding to the proteoglycan, betaglycan, and forming a stable complex with and, thereby, sequestering type II activin receptors while excluding type I receptor. In terms of biological role, inhibin B is a dimer of alpha and beta-B that plays a crucial role in the regulation of the reproductive system by inhibiting the secretion of follicle-stimulating hormone (FSH) from the anterior pituitary gland. Thereby, maintains reproductive homeostasis in both males and females. Acts as a more potent suppressor of FSH release than inhibin A. Functions as competitive receptor antagonist binding activin type II receptors with high affinity in the presence of the TGF-beta type III coreceptor/TGFBR3L. This chain is Inhibin alpha chain (INHA), found in Trichosurus vulpecula (Brush-tailed possum).